A 94-amino-acid chain; its full sequence is Small ribosomal subunit protein uS19 (94 aa).

This sequence belongs to the universal ribosomal protein uS19 family.

Protein S19 forms a complex with S13 that binds strongly to the 16S ribosomal RNA. The sequence is that of Small ribosomal subunit protein uS19 from Desulforudis audaxviator (strain MP104C).